The following is a 396-amino-acid chain: 1-deoxy-D-xylulose 5-phosphate reductoisomerase (396 aa).

NADPH-binding residues include T15, G16, S17, I18, G41, and N129. A 1-deoxy-D-xylulose 5-phosphate-binding site is contributed by K130. E131 lines the NADPH pocket. D155 contacts Mn(2+). 1-deoxy-D-xylulose 5-phosphate-binding residues include S156, E157, S182, and H205. Mn(2+) is bound at residue E157. G211 provides a ligand contact to NADPH. 1-deoxy-D-xylulose 5-phosphate contacts are provided by S218, N223, K224, and E227. E227 contacts Mn(2+).

Belongs to the DXR family. Mg(2+) serves as cofactor. Requires Mn(2+) as cofactor.

It catalyses the reaction 2-C-methyl-D-erythritol 4-phosphate + NADP(+) = 1-deoxy-D-xylulose 5-phosphate + NADPH + H(+). It participates in isoprenoid biosynthesis; isopentenyl diphosphate biosynthesis via DXP pathway; isopentenyl diphosphate from 1-deoxy-D-xylulose 5-phosphate: step 1/6. Catalyzes the NADPH-dependent rearrangement and reduction of 1-deoxy-D-xylulose-5-phosphate (DXP) to 2-C-methyl-D-erythritol 4-phosphate (MEP). In Xanthomonas oryzae pv. oryzae (strain MAFF 311018), this protein is 1-deoxy-D-xylulose 5-phosphate reductoisomerase.